The primary structure comprises 256 residues: UPF0246 protein Sbal_1048 (256 aa).

It belongs to the UPF0246 family.

This Shewanella baltica (strain OS155 / ATCC BAA-1091) protein is UPF0246 protein Sbal_1048.